Reading from the N-terminus, the 542-residue chain is Cryptochrome-1 (542 aa).

Positions 5–140 (GANVIWFRHG…DFVEKVSHTL (136 aa)) constitute a Photolyase/cryptochrome alpha/beta domain. FAD contacts are provided by residues arginine 237, serine 265, serine 267, glutamine 311, histidine 378, 410 to 412 (DAD), cysteine 416, and asparagine 419.

The protein belongs to the DNA photolyase class-1 family. Interacts with tim and per; promoted by light conditions. Interaction with tim irreversibly commits tim to proteasomal degradation. Interacts with l(1)G0136/CG8198. FAD is required as a cofactor. In terms of tissue distribution, expressed at higher levels in the head than in body and it is more expressed in antennae than in legs, wings and mouth appendages. Prominent expression is seen in cells of the lateral brain, which are close to or coincident with the clock neurons. Abundance oscillates in a circadian manner.

The protein localises to the cytoplasm. It is found in the perinuclear region. Its subcellular location is the nucleus. Functionally, blue light-dependent regulator that is the input of the circadian feedback loop. Has no photolyase activity for cyclobutane pyrimidine dimers or 6-4 photoproducts. Regulation of expression by light suggests a role in photoreception for locomotor activity rhythms. Functions, together with per, as a transcriptional repressor required for the oscillation of peripheral circadian clocks and for the correct specification of clock cells. Genes directly activated by the transcription factors Clock (Clk) and cycle (cyc) are repressed by cry. Necessary for light-dependent magnetosensitivity, an intact circadian system is not required for the magnetoreception mechanism to operate. Required for both the naive and trained responses to magnetic field, consistent with the notion that cry is in the input pathway of magnetic sensing. The polypeptide is Cryptochrome-1 (Drosophila melanogaster (Fruit fly)).